The chain runs to 296 residues: Phosphatidylglycerol--prolipoprotein diacylglyceryl transferase (296 aa).

7 helical membrane-spanning segments follow: residues 17–37 (LAVR…IVVG), 59–79 (MMFY…VLFY), 97–117 (GGMS…LFAW), 129–149 (FVAP…FING), 204–224 (SQLY…FLFA), 230–250 (MGAI…TVEF), and 257–277 (FLGL…PMIL). Arg142 contacts a 1,2-diacyl-sn-glycero-3-phospho-(1'-sn-glycerol).

It belongs to the Lgt family.

The protein resides in the cell inner membrane. The catalysed reaction is L-cysteinyl-[prolipoprotein] + a 1,2-diacyl-sn-glycero-3-phospho-(1'-sn-glycerol) = an S-1,2-diacyl-sn-glyceryl-L-cysteinyl-[prolipoprotein] + sn-glycerol 1-phosphate + H(+). Its pathway is protein modification; lipoprotein biosynthesis (diacylglyceryl transfer). Functionally, catalyzes the transfer of the diacylglyceryl group from phosphatidylglycerol to the sulfhydryl group of the N-terminal cysteine of a prolipoprotein, the first step in the formation of mature lipoproteins. The protein is Phosphatidylglycerol--prolipoprotein diacylglyceryl transferase of Burkholderia cenocepacia (strain HI2424).